The chain runs to 265 residues: RNA polymerase sigma factor SigI2 (265 aa).

The Polymerase core binding signature appears at D71–I84. Residues K211 to T230 constitute a DNA-binding region (H-T-H motif).

Belongs to the sigma-70 factor family. SigI subfamily. In terms of assembly, interacts with RsgI2.

It localises to the cytoplasm. Negatively regulated by the anti-sigma-I factor RsgI2. Binding of the polysaccharide substrate to RsgI2 may lead to the release and activation of SigI2. Its function is as follows. Sigma factors are initiation factors that promote the attachment of RNA polymerase to specific initiation sites and are then released. This sigma factor is involved in regulation of cellulosomal genes via an external polysaccharide-sensing mechanism. In Acetivibrio thermocellus (strain ATCC 27405 / DSM 1237 / JCM 9322 / NBRC 103400 / NCIMB 10682 / NRRL B-4536 / VPI 7372) (Clostridium thermocellum), this protein is RNA polymerase sigma factor SigI2.